Here is a 221-residue protein sequence, read N- to C-terminus: Molybdenum cofactor guanylyltransferase (221 aa).

Residues 18–20, K35, N63, D81, and D112 contribute to the GTP site; that span reads IAG. D112 provides a ligand contact to Mg(2+).

This sequence belongs to the MobA family. As to quaternary structure, monomer. The cofactor is Mg(2+).

The protein localises to the cytoplasm. The catalysed reaction is Mo-molybdopterin + GTP + H(+) = Mo-molybdopterin guanine dinucleotide + diphosphate. Transfers a GMP moiety from GTP to Mo-molybdopterin (Mo-MPT) cofactor (Moco or molybdenum cofactor) to form Mo-molybdopterin guanine dinucleotide (Mo-MGD) cofactor. The polypeptide is Molybdenum cofactor guanylyltransferase (Brucella melitensis biotype 2 (strain ATCC 23457)).